A 155-amino-acid chain; its full sequence is Endoribonuclease YbeY (155 aa).

His120, His124, and His130 together coordinate Zn(2+).

The protein belongs to the endoribonuclease YbeY family. Requires Zn(2+) as cofactor.

It is found in the cytoplasm. Its function is as follows. Single strand-specific metallo-endoribonuclease involved in late-stage 70S ribosome quality control and in maturation of the 3' terminus of the 16S rRNA. In Staphylococcus aureus (strain MSSA476), this protein is Endoribonuclease YbeY.